A 1286-amino-acid polypeptide reads, in one-letter code: Protein patched (1286 aa).

Residues 1 to 76 (MDRDSLPRVP…GSSVQKHAGK (76 aa)) are Cytoplasmic-facing. The chain crosses the membrane as a helical span at residues 77–92 (VLFVAILVLSTFCVGL). The Extracellular portion of the chain corresponds to 93–427 (KSAQIHSKVH…DDILAKFSHP (335 aa)). Residues Asn142, Asn298, Asn335, and Asn388 are each glycosylated (N-linked (GlcNAc...) asparagine). The helical transmembrane segment at 428–448 (SALSIVIGVAVTVLYAFCTLL) threads the bilayer. The 156-residue stretch at 428–583 (SALSIVIGVA…LLVFPAMISL (156 aa)) folds into the SSD domain. Topologically, residues 449-465 (RWRDPVRGQSSVGVAGV) are cytoplasmic. Residues 466–486 (LLMCFSTAAGLGLSALLGIVF) form a helical membrane-spanning segment. Residues 487–492 (NAASTQ) are Extracellular-facing. Residues 493-511 (VVPFLALGLGVDHIFMLTA) form a helical membrane-spanning segment. Residues 512-532 (AYAESNRREQTKLILKKVGPS) lie on the Cytoplasmic side of the membrane. A helical membrane pass occupies residues 533–553 (ILFSACSTAGSFFAAAFIPVP). Residues 554–562 (ALKVFCLQA) are Extracellular-facing. Residues 563–583 (AIVMCSNLAAALLVFPAMISL) traverse the membrane as a helical segment. At 584 to 677 (DLRRRTAGRA…QHYTPFLMRS (94 aa)) the chain is on the cytoplasmic side. Residues 678 to 699 (WVKFLTVMGFLAALISSLYAST) traverse the membrane as a helical segment. Topologically, residues 700–931 (RLQDGLDIID…IRDLSVKYEG (232 aa)) are extracellular. Asn807 is a glycosylation site (N-linked (GlcNAc...) asparagine). The helical transmembrane segment at 932-952 (FGLPNYPSGIPFIFWEQYMTL) threads the bilayer. At 953 to 955 (RSS) the chain is on the cytoplasmic side. Residues 956–976 (LAMILACVLLAALVLVSLLLL) traverse the membrane as a helical segment. Residues 977 to 1007 (SVWAAVLVILSVLASLAQIFGAMTLLGIKLS) are Extracellular-facing. A helical transmembrane segment spans residues 1008–1028 (AIPAVILILSVGMMLCFNVLI). Residues 1029-1056 (SLGFMTSVGNRQRRVQLSMQMSLGPLVH) are Cytoplasmic-facing. The chain crosses the membrane as a helical span at residues 1057–1077 (GMLTSGVAVFMLSTSPFEFVI). Residues 1078–1082 (RHFCW) are Extracellular-facing. The chain crosses the membrane as a helical span at residues 1083–1103 (LLLVVLCVGACNSLLVFPILL). Over 1104-1286 (SMVGPEAELV…RAVRSYNFTS (183 aa)) the chain is Cytoplasmic. A disordered region spans residues 1116–1237 (EHPDRISTPS…PPPFPTAYPP (122 aa)). 2 stretches are compositionally biased toward polar residues: residues 1141–1152 (VQGSRSSRGSCQ) and 1165–1191 (PSLT…NDWT). The segment covering 1199-1216 (PASYAAPPPAYHKAAAQQ) has biased composition (low complexity). The span at 1224-1235 (PTTPPPPFPTAY) shows a compositional bias: pro residues.

Belongs to the patched family. Interacts (via C-terminal cytoplasmic region) with CG5504/l(2)tid; the interaction is probably direct. Interacts with hh/hedgehog.

The protein localises to the membrane. In terms of biological role, segmentation polarity protein. Acts as a receptor for the hedgehog protein (hh). Associates with the smoothened protein (SMO) to transduce the hedgehog signal leading to the activation of wingless, decapentaplegic and patched itself. Participates in cell interactions that establish pattern within the segment and the imaginal disks during development. In the absence of HH, represses the constitutive signaling activity of smo through fused (FU). In Drosophila melanogaster (Fruit fly), this protein is Protein patched.